The following is a 70-amino-acid chain: U2-agatoxin-Ao1m (70 aa).

A signal peptide spans 1 to 20 (MRAIISLFLISAMVFSMIQA). A propeptide spanning residues 21–34 (VPEEXGLQLSEDER) is cleaved from the precursor. Disulfide bonds link Cys-37/Cys-53, Cys-44/Cys-58, and Cys-52/Cys-68. Residue Leu-69 is modified to Leucine amide.

It belongs to the neurotoxin 01 (U2-agtx) family. As to expression, expressed by the venom gland.

The protein resides in the secreted. In terms of biological role, insect active toxin causing rapid but reversible paralysis in crickets. No activity shown in mammals. Does not show effect on mammalian voltage-gated calcium channels. The polypeptide is U2-agatoxin-Ao1m (Agelena orientalis (Funnel-web spider)).